The primary structure comprises 62 residues: DNA-directed RNA polymerase subunit Rpo10 (62 aa).

Positions 6, 9, 43, and 44 each coordinate Zn(2+).

This sequence belongs to the archaeal Rpo10/eukaryotic RPB10 RNA polymerase subunit family. As to quaternary structure, part of the RNA polymerase complex. The cofactor is Zn(2+).

The protein localises to the cytoplasm. It catalyses the reaction RNA(n) + a ribonucleoside 5'-triphosphate = RNA(n+1) + diphosphate. In terms of biological role, DNA-dependent RNA polymerase (RNAP) catalyzes the transcription of DNA into RNA using the four ribonucleoside triphosphates as substrates. This Methanosarcina acetivorans (strain ATCC 35395 / DSM 2834 / JCM 12185 / C2A) protein is DNA-directed RNA polymerase subunit Rpo10.